The chain runs to 645 residues: Minor extracellular protease Epr (645 aa).

Positions 1-27 (MKNMSCKLVVSVTLFFSFLTIGPLAHA) are cleaved as a signal peptide. The propeptide occupies 28-103 (QNSSEKEVIV…AADSTDFKVL (76 aa)). Residues 115–382 (QWNLEPIQVK…YGLIQYKAQA (268 aa)) enclose the Peptidase S8 domain. Active-site charge relay system residues include aspartate 142, histidine 172, and serine 326. Disordered stretches follow at residues 490–577 (KQAK…KTAL) and 591–645 (AEAK…KPKK). Residues 491–508 (QAKDKVAKAEKSKKKTDV) are compositionally biased toward basic and acidic residues. Polar residues predominate over residues 522-547 (SEKTSLQKRLNKVKSTNLKTAQQSVS). A compositionally biased stretch (basic and acidic residues) spans 592-610 (EAKKVETAKAKVKKAEKDK).

It belongs to the peptidase S8 family. Post-translationally, may undergo two steps of processing in its passage through the cell membrane: removal of the N-terminal signal sequence and cleavage of the C-terminal domain. Several active forms of Epr with molecular masses between 40 and 34 kDa were found in the medium of B.subtilis cultures. The size variation of the active forms expressed by the complete epr gene appears to be the result of partial removal of the C-terminus either by processing or degradation.

The protein localises to the secreted. It localises to the cell wall. Its activity is regulated as follows. Requires Ca(2+) for stability. Activity is inhibited by phenylmethylsulfonyl fluoride (PMSF) and EDTA. Its function is as follows. Serine protease. Involved in the production of the competence and sporulation stimulating factor CSF. In addition, is essential for swarming motility. Plays a key role in DegU-mediated swarming motility. The protease activity is dispensable for swarming. Not essential for growth or sporulation. In Bacillus subtilis (strain 168), this protein is Minor extracellular protease Epr.